We begin with the raw amino-acid sequence, 86 residues long: Neuropeptide-like 2 (86 aa).

The signal sequence occupies residues 1–19 (MAKLAICILVFALFALALS). Propeptides lie at residues 20 to 34 (ARVPREESNPAQEFL) and 45 to 86 (IEKL…AAST).

In terms of tissue distribution, hemolymph (at protein level).

The protein localises to the secreted. This is Neuropeptide-like 2 (Nplp2) from Drosophila melanogaster (Fruit fly).